A 146-amino-acid chain; its full sequence is Large ribosomal subunit protein bL21 (146 aa).

Positions 96–146 (KKKTRRKMGHRQELTRVMVKSISITNSTPKTSSKTEVKKKSTSPKASNPEN) are disordered.

This sequence belongs to the bacterial ribosomal protein bL21 family. As to quaternary structure, part of the 50S ribosomal subunit. Contacts protein L20.

This protein binds to 23S rRNA in the presence of protein L20. This chain is Large ribosomal subunit protein bL21, found in Prochlorococcus marinus subsp. pastoris (strain CCMP1986 / NIES-2087 / MED4).